The sequence spans 381 residues: Queuine tRNA-ribosyltransferase (381 aa).

D96 functions as the Proton acceptor in the catalytic mechanism. Residues D96–F100, D150, Q193, and G220 contribute to the substrate site. Positions G251 to S257 are RNA binding. The Nucleophile role is filled by D270. Residues T275–R279 form an RNA binding; important for wobble base 34 recognition region. Zn(2+) contacts are provided by C308, C310, C313, and H339.

This sequence belongs to the queuine tRNA-ribosyltransferase family. In terms of assembly, homodimer. Within each dimer, one monomer is responsible for RNA recognition and catalysis, while the other monomer binds to the replacement base PreQ1. Requires Zn(2+) as cofactor.

It catalyses the reaction 7-aminomethyl-7-carbaguanine + guanosine(34) in tRNA = 7-aminomethyl-7-carbaguanosine(34) in tRNA + guanine. The protein operates within tRNA modification; tRNA-queuosine biosynthesis. Functionally, catalyzes the base-exchange of a guanine (G) residue with the queuine precursor 7-aminomethyl-7-deazaguanine (PreQ1) at position 34 (anticodon wobble position) in tRNAs with GU(N) anticodons (tRNA-Asp, -Asn, -His and -Tyr). Catalysis occurs through a double-displacement mechanism. The nucleophile active site attacks the C1' of nucleotide 34 to detach the guanine base from the RNA, forming a covalent enzyme-RNA intermediate. The proton acceptor active site deprotonates the incoming PreQ1, allowing a nucleophilic attack on the C1' of the ribose to form the product. After dissociation, two additional enzymatic reactions on the tRNA convert PreQ1 to queuine (Q), resulting in the hypermodified nucleoside queuosine (7-(((4,5-cis-dihydroxy-2-cyclopenten-1-yl)amino)methyl)-7-deazaguanosine). This Enterococcus faecalis (strain ATCC 700802 / V583) protein is Queuine tRNA-ribosyltransferase.